Here is a 232-residue protein sequence, read N- to C-terminus: dITP/XTP pyrophosphatase (232 aa).

10 to 15 (TRNKGK) is a substrate binding site. D72 functions as the Proton acceptor in the catalytic mechanism. D72 serves as a coordination point for Mg(2+). Substrate-binding positions include S73, 153-156 (FGYD), K176, and 181-182 (HR).

This sequence belongs to the HAM1 NTPase family. As to quaternary structure, homodimer. The cofactor is Mg(2+).

It catalyses the reaction XTP + H2O = XMP + diphosphate + H(+). The enzyme catalyses dITP + H2O = dIMP + diphosphate + H(+). The catalysed reaction is ITP + H2O = IMP + diphosphate + H(+). In terms of biological role, pyrophosphatase that catalyzes the hydrolysis of nucleoside triphosphates to their monophosphate derivatives, with a high preference for the non-canonical purine nucleotides XTP (xanthosine triphosphate), dITP (deoxyinosine triphosphate) and ITP. Seems to function as a house-cleaning enzyme that removes non-canonical purine nucleotides from the nucleotide pool, thus preventing their incorporation into DNA/RNA and avoiding chromosomal lesions. This Syntrophobacter fumaroxidans (strain DSM 10017 / MPOB) protein is dITP/XTP pyrophosphatase.